We begin with the raw amino-acid sequence, 212 residues long: Large ribosomal subunit protein uL3 (212 aa).

Polar residues predominate over residues 140-155; the sequence is SVSHRAIGSTGQNQSP. A disordered region spans residues 140 to 166; sequence SVSHRAIGSTGQNQSPGKVFKGKKMPG. Glutamine 153 bears the N5-methylglutamine mark.

The protein belongs to the universal ribosomal protein uL3 family. In terms of assembly, part of the 50S ribosomal subunit. Forms a cluster with proteins L14 and L19. In terms of processing, methylated by PrmB.

One of the primary rRNA binding proteins, it binds directly near the 3'-end of the 23S rRNA, where it nucleates assembly of the 50S subunit. This Psychrobacter cryohalolentis (strain ATCC BAA-1226 / DSM 17306 / VKM B-2378 / K5) protein is Large ribosomal subunit protein uL3.